The chain runs to 1517 residues: MDNQQDKVIAASANGENNLINGVKENDSEEQDVAMKSFAALEASTPIQPIPVVQKESPMFPRGLLPLPSKKPCMQSPPSPLGLIEAPDHSATGASVNAISLTSGVAKGLNTWSLPNECEKAPFAIMEPAGISALNGDCLMQPSRTCLGCFMESKEAVDPEPGISLKVGDLNRDYETCAVSDIGIQCINAGENLKYGEQLLSDQLLGFPLHKSRAGDRRESEKPDIDLEDPTQKSYYEALLLDKCNTEEALLANSNQDWGYFETFISESKIELLDLCSKNELSVNLFSEEDVENYMFDDDESTLGSDVCSLKIRYESFQDNVRDKTTLLMQEDAQFNFFPSVFTTCPKRESKSGVLKQSSDLSQFKVPDVSIIWGDEDKNLDKKKGKEEVHEDKSIEKKDEKDNGEKPALNNKPCSGLEVEQFKNLKPDHLTNSLETSGNFSDDSSFIEVSYDAMGEIKDCSRYMARDTNSGSSSSQQNYGLRAKRKVRYSEDYLYDVDSLEGEKVNERKEWPPGGSKEEDDDEWCPKKRRKVTRKEPPVIIKYIIINRFKGEKNMLVKLGKVDASETTVNLSESQLSKYAKLSPLKGFWQKKKKQKNGNTDSVKTPFCQKQSFEPGSFEVSFLPPARKRKSKLGNRHRIQRIQSMEASASSKQVSFGSDQKQASNRKEEGGLKGTPKSALLAAPSSANGSHLRGLIGPDSAKVKAQDTEFKGPERKVLNKIKFKSEARLKSKKIKTGQENKPVVQMSPVSEDPSSKANLKNEVTPGTSNSSHMSEFHETKVVKNSTFLPTTCSSEMPLSSANVATNIPVIPGGYLQTLLDASDLSNNTSISYFTNHSAEQNEASLSQTEKAFAPLQSAQDCVLSSSSDSQLQQSSQNFKMEASNYGSLWPDKDTSGSQEFMTEVSGEIATSQSSEFEATQVVSMENNLTAITYSPVCLNSGGSGCNKVLYASVQDSHLAPDDSYQLCHFNNGEICFPFQQGPISTEDDGQLFSFDSMTPLSVSSSSYCPLSLKSCEKDGDDDINDDFLAHCSPKLVIQQSIDEIAPLKESTDLLDISNFTPDKFRHSSLSEMSPPDTPSLSPQSTRCESIKTLGTMKGFQEGVPGSLSSMEKIKWDCSTLSQQVQADDGFTLNNHQFQFHMFNDEDSVGLLQKNPCLSTFDEPAGQISANNKVSKSRKKTSPGKSGAVSQSSSQKNTRKKSPKASNKGVEKPPSKTSRQVPKSAKKGKYVAAVNGEKMQIGIGHSGGQPNSTSSNGKTLTECIQHGGPVAPMKIPSQKGLSGDWALGKESRPGWNDMSVVTNTNNLLDDDQREFQEPSYILSNIASGMADVQRFMMASMEPLWEPMEHQGESNTFYSPDSNSLKLKTLKILAGTPQESKKKINNGSSGATKNHRSIKAVSKSSGKAAVGDPGHADVSGSSEDSRSAFFDKKYSNMNTLGNNGPTHKKLYRHKSSSKTLRDEKYKGKRVEREQIHKDEAGTTCFEKLRGSSYNLLKAETAFGVLPVFEEETHIFQKDI.

The span at 381 to 405 (DKKKGKEEVHEDKSIEKKDEKDNGE) shows a compositional bias: basic and acidic residues. Disordered stretches follow at residues 381–416 (DKKK…PCSG), 505–529 (VNER…PKKR), 644–697 (SMEA…GLIG), 732–775 (KKIK…HMSE), 1065–1084 (RHSS…SPQS), 1161–1228 (DEPA…KKGK), and 1372–1422 (AGTP…SSED). The segment covering 644–663 (SMEASASSKQVSFGSDQKQA) has biased composition (polar residues). A compositionally biased stretch (low complexity) spans 678–687 (SALLAAPSSA). Positions 764-773 (TPGTSNSSHM) are enriched in polar residues.

The protein resides in the nucleus. It is found in the cytoplasm. Involved in neurite outgrowth by regulating cell-cell adhesion via the N-cadherin signaling pathway. May act by regulating expression of protein-coding genes, such as N-cadherins and integrin beta-1 (ITGB1). This chain is Neurite extension and migration factor, found in Rattus norvegicus (Rat).